The sequence spans 247 residues: Cell division protein ZapD (247 aa).

The protein belongs to the ZapD family. In terms of assembly, interacts with FtsZ.

It is found in the cytoplasm. In terms of biological role, cell division factor that enhances FtsZ-ring assembly. Directly interacts with FtsZ and promotes bundling of FtsZ protofilaments, with a reduction in FtsZ GTPase activity. This Cronobacter sakazakii (strain ATCC BAA-894) (Enterobacter sakazakii) protein is Cell division protein ZapD.